The primary structure comprises 134 residues: Protein TraK (134 aa).

Positions 74–134 (HIKAKPADVP…NPTPDKKDLL (61 aa)) are disordered. A compositionally biased stretch (low complexity) spans 83–92 (PAPQAKAAEP). A compositionally biased stretch (basic and acidic residues) spans 99 to 112 (PEPRRPKQGGKAEK).

The chain is Protein TraK (traK) from Escherichia coli.